The following is a 167-amino-acid chain: Putative ripening-related protein 6 (167 aa).

The signal sequence occupies residues 1-23 (MANAKQLALFAMLVLLLASCAAA). Residues 28–57 (KPDPCDGGGGGVDSHLPPGMRRCSSPAVSE) form a disordered region.

It belongs to the kiwellin family.

The protein resides in the secreted. In Oryza sativa subsp. japonica (Rice), this protein is Putative ripening-related protein 6.